Reading from the N-terminus, the 668-residue chain is Metal reductase (668 aa).

FMN-binding positions include 23-25 (PMH), Gly57, Gln98, Arg216, Arg290, and 312-313 (AR). 2 residues coordinate [4Fe-4S] cluster: Cys336 and Cys339. An FAD-binding site is contributed by Gln341. [4Fe-4S] cluster-binding residues include Cys343 and Cys355. 5 residues coordinate FAD: Ala386, Glu405, Gln413, Arg423, and Ala450.

It in the N-terminal section; belongs to the NADH:flavin oxidoreductase/NADH oxidase family. Homotetramer. Requires FMN as cofactor. The cofactor is FAD. [4Fe-4S] cluster is required as a cofactor.

It is found in the cytoplasm. In terms of biological role, metal reductase able to reduce Fe(III)-chelates to Fe(II)-chelates, as well as soluble Cr(VI) and U(VI), using NADH as electron donor. Cannot use NADPH as an electron donor. Is unable to reduce riboflavin and FMN with NADH as electron donor. May have an in vivo role in metal reduction in D.reducens, which is an organism capable of reducing contaminant heavy metals and radionuclides. This is Metal reductase from Desulforamulus reducens (strain ATCC BAA-1160 / DSM 100696 / MI-1) (Desulfotomaculum reducens).